Here is a 356-residue protein sequence, read N- to C-terminus: Nucleosome assembly protein 1;4 (356 aa).

A coiled-coil region spans residues Val34 to Glu88. The Nuclear export signal motif lies at Leu55 to Gln70. The short motif at Lys230–Lys235 is the Nuclear localization signal element. The segment at Phe304–Glu356 is disordered. Acidic residues predominate over residues Ala309 to Glu343. Residues Lys347 to Glu356 are compositionally biased toward basic residues.

Belongs to the nucleosome assembly protein (NAP) family. In terms of assembly, can form homomeric and heteromeric protein complexes with NAP1;3. Binds histones H2A and H2B in vivo. Also able to bind histones H1 and H4 in vitro. Interacts with CYCB1;1 and with alpha tubulin.

The protein localises to the nucleus. Its subcellular location is the cytoplasm. Functionally, may modulate chromatin structure by regulation of nucleosome assembly/disassembly. Could function together with B-type cyclins in the regulation of microtubule dynamics. The polypeptide is Nucleosome assembly protein 1;4 (NAP1;4) (Nicotiana tabacum (Common tobacco)).